Here is a 1059-residue protein sequence, read N- to C-terminus: Carbamoyl phosphate synthase large chain (1059 aa).

Residues 1–401 form a carboxyphosphate synthetic domain region; sequence MPKRSDIKKI…SLLKACRSLE (401 aa). 12 residues coordinate ATP: Arg-129, Arg-169, Gly-175, Gly-176, Arg-208, Ile-210, Glu-215, Gly-241, Ile-242, His-243, Gln-284, and Glu-298. An ATP-grasp 1 domain is found at 133-327; the sequence is KQLMEELEQP…IAKLAAKIAV (195 aa). Residues Gln-284, Glu-298, and Asn-300 each contribute to the Mg(2+) site. Residues Gln-284, Glu-298, and Asn-300 each contribute to the Mn(2+) site. An oligomerization domain region spans residues 402 to 546; the sequence is IGVYHNEMSE…YSTYEWENES (145 aa). Positions 547–929 are carbamoyl phosphate synthetic domain; the sequence is IKSDKESVIV…ALYKAFEASY (383 aa). One can recognise an ATP-grasp 2 domain in the interval 671–861; that stretch reads EQALKDLDIP…MAQVATNLIL (191 aa). Arg-707, Ser-746, Ile-748, Glu-752, Gly-777, Val-778, His-779, Ser-780, Gln-820, and Glu-832 together coordinate ATP. Gln-820, Glu-832, and Asn-834 together coordinate Mg(2+). Mn(2+) contacts are provided by Gln-820, Glu-832, and Asn-834. The MGS-like domain maps to 930-1059; sequence LHLPTFGNVI…ESRSFTTEAI (130 aa). The allosteric domain stretch occupies residues 930-1059; sequence LHLPTFGNVI…ESRSFTTEAI (130 aa).

It belongs to the CarB family. As to quaternary structure, composed of two chains; the small (or glutamine) chain promotes the hydrolysis of glutamine to ammonia, which is used by the large (or ammonia) chain to synthesize carbamoyl phosphate. Tetramer of heterodimers (alpha,beta)4. Requires Mg(2+) as cofactor. Mn(2+) serves as cofactor.

It carries out the reaction hydrogencarbonate + L-glutamine + 2 ATP + H2O = carbamoyl phosphate + L-glutamate + 2 ADP + phosphate + 2 H(+). The enzyme catalyses hydrogencarbonate + NH4(+) + 2 ATP = carbamoyl phosphate + 2 ADP + phosphate + 2 H(+). It participates in amino-acid biosynthesis; L-arginine biosynthesis; carbamoyl phosphate from bicarbonate: step 1/1. Its pathway is pyrimidine metabolism; UMP biosynthesis via de novo pathway; (S)-dihydroorotate from bicarbonate: step 1/3. Functionally, large subunit of the glutamine-dependent carbamoyl phosphate synthetase (CPSase). CPSase catalyzes the formation of carbamoyl phosphate from the ammonia moiety of glutamine, carbonate, and phosphate donated by ATP, constituting the first step of 2 biosynthetic pathways, one leading to arginine and/or urea and the other to pyrimidine nucleotides. The large subunit (synthetase) binds the substrates ammonia (free or transferred from glutamine from the small subunit), hydrogencarbonate and ATP and carries out an ATP-coupled ligase reaction, activating hydrogencarbonate by forming carboxy phosphate which reacts with ammonia to form carbamoyl phosphate. The sequence is that of Carbamoyl phosphate synthase large chain from Streptococcus thermophilus (strain ATCC BAA-250 / LMG 18311).